Here is a 389-residue protein sequence, read N- to C-terminus: Alanine racemase 1 (389 aa).

Lys41 functions as the Proton acceptor; specific for D-alanine in the catalytic mechanism. Position 41 is an N6-(pyridoxal phosphate)lysine (Lys41). Arg137 contributes to the substrate binding site. Tyr266 serves as the catalytic Proton acceptor; specific for L-alanine. Met313 is a binding site for substrate.

The protein belongs to the alanine racemase family. Pyridoxal 5'-phosphate is required as a cofactor.

It catalyses the reaction L-alanine = D-alanine. The protein operates within amino-acid biosynthesis; D-alanine biosynthesis; D-alanine from L-alanine: step 1/1. In terms of biological role, catalyzes the interconversion of L-alanine and D-alanine. May also act on other amino acids. In Bacillus subtilis (strain 168), this protein is Alanine racemase 1 (alr1).